The primary structure comprises 168 residues: Phosphopantetheine adenylyltransferase (168 aa).

Substrate is bound at residue Thr9. Residues 9-10 (TF) and His17 contribute to the ATP site. Substrate is bound by residues Lys41, Leu74, and Arg88. ATP-binding positions include 89-91 (GLR), Glu99, and 124-130 (LQPIASR).

This sequence belongs to the bacterial CoaD family. As to quaternary structure, homohexamer. Requires Mg(2+) as cofactor.

The protein resides in the cytoplasm. The catalysed reaction is (R)-4'-phosphopantetheine + ATP + H(+) = 3'-dephospho-CoA + diphosphate. It participates in cofactor biosynthesis; coenzyme A biosynthesis; CoA from (R)-pantothenate: step 4/5. In terms of biological role, reversibly transfers an adenylyl group from ATP to 4'-phosphopantetheine, yielding dephospho-CoA (dPCoA) and pyrophosphate. This chain is Phosphopantetheine adenylyltransferase, found in Sphingopyxis alaskensis (strain DSM 13593 / LMG 18877 / RB2256) (Sphingomonas alaskensis).